The primary structure comprises 313 residues: PDCD10 and GCKIII kinases-associated protein 1 (313 aa).

The tract at residues 42–95 (KGTQNSEVEVPGSTLHSGSLSKPDSSGSTTGLPCQGSLTQEDSEERPCVEKHGI) is disordered. Positions 58-69 (SGSLSKPDSSGS) are enriched in low complexity. Ser-60 carries the post-translational modification Phosphoserine. The span at 70 to 81 (TTGLPCQGSLTQ) shows a compositional bias: polar residues. The residue at position 104 (Thr-104) is a Phosphothreonine. 3 positions are modified to phosphoserine: Ser-107, Ser-237, and Ser-240. Positions 253 to 288 (YFKEEDPTQPTPVADPGNEREDPHTYNGNKEGAVVD) are disordered.

As to quaternary structure, interacts with KEAP1; this interaction prevents the ubiquitination of KEAP1 by TRIM25, thus protecting KEAP1 from degradation. Found in association with PDCD10 and members of the STE20 kinases, such as STK24, STK25, and STK26.

It localises to the cell membrane. Acts as a tumor suppressor. Acts as a tumor suppressor for colorectal cancer cell proliferation by targeting KEAP1/USP17/ELK1/CDK6 axis. The sequence is that of PDCD10 and GCKIII kinases-associated protein 1 from Rattus norvegicus (Rat).